The chain runs to 534 residues: Thromboxane-A synthase (534 aa).

The Cytoplasmic segment spans residues 1-10; it reads MEVLGFLSPE. The helical transmembrane segment at 11-31 threads the bilayer; that stretch reads LNGPMVTMALAVVLLALLKWY. Topologically, residues 32–75 are lumenal; sequence STSAFSRLEKLGIRHPKPSPFIGNLTFFRQGFWESHMELRKQYG. A helical membrane pass occupies residues 76–96; it reads PLSGYYLGRRMIVVISDPDMI. The Cytoplasmic segment spans residues 97–223; that stretch reads KQVLAEKFSN…RRFFAFSVPR (127 aa). A helical transmembrane segment spans residues 224-244; sequence LILVLILSFPSIMVPLARILP. The Lumenal portion of the chain corresponds to 245–336; it reads NKKRDEVNGF…LTVDEVVGQA (92 aa). The chain crosses the membrane as a helical span at residues 337–357; the sequence is FLFLIAGYEIITNTLSFVTYL. Over 358–534 the chain is Cytoplasmic; that stretch reads LATNPDCQEK…NGVYIRIVPR (177 aa). Cysteine 480 contributes to the heme binding site.

It belongs to the cytochrome P450 family. Monomer. The cofactor is heme. Expressed in lung, kidney and thymus.

It is found in the endoplasmic reticulum membrane. The catalysed reaction is prostaglandin H2 = thromboxane A2. It carries out the reaction prostaglandin H2 = (12S)-hydroxy-(5Z,8E,10E)-heptadecatrienoate + malonaldehyde. It catalyses the reaction a hydroperoxyeicosatetraenoate = an oxoeicosatetraenoate + H2O. The enzyme catalyses (15S)-hydroperoxy-(5Z,8Z,11Z,13E)-eicosatetraenoate = 15-oxo-(5Z,8Z,11Z,13E)-eicosatetraenoate + H2O. The catalysed reaction is (15S)-hydroperoxy-(5Z,8Z,11Z,13E)-eicosatetraenoate + AH2 = (15S)-hydroxy-(5Z,8Z,11Z,13E)-eicosatetraenoate + A + H2O. In terms of biological role, catalyzes the conversion of prostaglandin H2 (PGH2) to thromboxane A2 (TXA2), a potent inducer of blood vessel constriction and platelet aggregation. Also cleaves PGH2 to 12-hydroxy-heptadecatrienoicacid (12-HHT) and malondialdehyde, which is known to act as a mediator of DNA damage. 12-HHT and malondialdehyde are formed stoichiometrically in the same amounts as TXA2. Additionally, displays dehydratase activity, toward (15S)-hydroperoxy-(5Z,8Z,11Z,13E)-eicosatetraenoate (15(S)-HPETE) producing 15-KETE and 15-HETE. This Sus scrofa (Pig) protein is Thromboxane-A synthase (TBXAS1).